We begin with the raw amino-acid sequence, 290 residues long: UPF0507 protein YML003W (290 aa).

This sequence belongs to the UPF0507 family.

The protein is UPF0507 protein YML003W of Saccharomyces cerevisiae (strain ATCC 204508 / S288c) (Baker's yeast).